The sequence spans 508 residues: DASH complex subunit ASK1 (508 aa).

2 disordered regions span residues 86-138 and 150-355; these read LVDG…TLSS and SRAA…QLRS. Residues 116–138 are compositionally biased toward polar residues; that stretch reads EPSQYTPRPQTSAGGHDTTTLSS. The segment covering 161–175 has biased composition (basic and acidic residues); it reads QHHDDSSVLTDRDGD. Acidic residues predominate over residues 201–213; the sequence is DEMDIDMDEEDSE. A compositionally biased stretch (basic and acidic residues) spans 229–238; the sequence is RYYDDDHGFE. Over residues 239-258 the composition is skewed to acidic residues; it reads QGEEEEDEEEEEEEEEEEEG. Residues 326–338 are compositionally biased toward basic and acidic residues; sequence IKQEDTEKKRPLW.

It belongs to the DASH complex ASK1 family. As to quaternary structure, component of the DASH complex consisting of ASK1, DAD1, DAD2, DAD3, DAD4, DAM1, DUO1, HSK3, SPC19 and SPC34, with a stoichiometry of one copy of each subunit per complex. Multiple DASH complexes oligomerize to form a ring that encircles spindle microtubules and organizes the rod-like NDC80 complexes of the outer kinetochore. On cytoplasmic microtubules, DASH complexes appear to form patches instead of rings.

It localises to the chromosome. It is found in the centromere. The protein localises to the kinetochore. Its subcellular location is the cytoplasm. The protein resides in the cytoskeleton. It localises to the spindle. It is found in the nucleus. Component of the DASH complex that connects microtubules with kinetochores and couples microtubule depolymerisation to chromosome movement; it is involved in retrieving kinetochores to the spindle poles before their re-orientation on the spindle in early mitosis and allows microtubule depolymerization to pull chromosomes apart and resist detachment during anaphase. Kinetochores, consisting of a centromere-associated inner segment and a microtubule-contacting outer segment, play a crucial role in chromosome segregation by mediating the physical connection between centromeric DNA and microtubules. Kinetochores also serve as an input point for the spindle assembly checkpoint, which delays anaphase until all chromosomes have bioriented on the mitotic spindle. The sequence is that of DASH complex subunit ASK1 from Chaetomium thermophilum (strain DSM 1495 / CBS 144.50 / IMI 039719) (Thermochaetoides thermophila).